Consider the following 350-residue polypeptide: Serine-threonine kinase receptor-associated protein (350 aa).

WD repeat units follow at residues 12-56 (GHTR…GTFL), 57-96 (GHKGAVWGATLNKDATKAATAAADFTAKVWDAVSGDELMT), 98-137 (AHKHIVKTVDFTQDSNYLLTGGQDKLLRIYDLNKPEAEPK), 141-179 (GHTSGIKKALWCSEDKQILSADDKTVRLWDHATMTEVKS), 180-212 (LNFNMSVSSMEYIPEGEILVITYGRSIAFHSAV), 221-262 (EAPA…ESYK), and 263-302 (GHFGPIHCVRFSPDGELYASGSEDGTLRLWQTVVGKTYGL). Ser-312, Ser-335, and Ser-338 each carry phosphoserine.

This sequence belongs to the WD repeat STRAP family. In terms of assembly, part of the core SMN complex that contains SMN1, GEMIN2/SIP1, DDX20/GEMIN3, GEMIN4, GEMIN5, GEMIN6, GEMIN7, GEMIN8 and STRAP/UNRIP. Part of the SMN-Sm complex that contains SMN1, GEMIN2/SIP1, DDX20/GEMIN3, GEMIN4, GEMIN5, GEMIN6, GEMIN7, GEMIN8, STRAP/UNRIP and the Sm proteins SNRPB, SNRPD1, SNRPD2, SNRPD3, SNRPE, SNRPF and SNRPG. Associates with the SMN complex in the cytoplasm but not in the nucleus. Interacts with GEMIN6; the interaction is direct. Interacts with GEMIN7; the interaction is direct. Interacts with CSDE1/UNR and MAWBP. Interacts with PDPK1. Interacts with TRIM48.

It is found in the cytoplasm. Its subcellular location is the nucleus. Its function is as follows. The SMN complex catalyzes the assembly of small nuclear ribonucleoproteins (snRNPs), the building blocks of the spliceosome, and thereby plays an important role in the splicing of cellular pre-mRNAs. Most spliceosomal snRNPs contain a common set of Sm proteins SNRPB, SNRPD1, SNRPD2, SNRPD3, SNRPE, SNRPF and SNRPG that assemble in a heptameric protein ring on the Sm site of the small nuclear RNA to form the core snRNP (Sm core). In the cytosol, the Sm proteins SNRPD1, SNRPD2, SNRPE, SNRPF and SNRPG are trapped in an inactive 6S pICln-Sm complex by the chaperone CLNS1A that controls the assembly of the core snRNP. To assemble core snRNPs, the SMN complex accepts the trapped 5Sm proteins from CLNS1A forming an intermediate. Binding of snRNA inside 5Sm triggers eviction of the SMN complex, thereby allowing binding of SNRPD3 and SNRPB to complete assembly of the core snRNP. STRAP plays a role in the cellular distribution of the SMN complex. Negatively regulates TGF-beta signaling but positively regulates the PDPK1 kinase activity by enhancing its autophosphorylation and by significantly reducing the association of PDPK1 with 14-3-3 protein. The sequence is that of Serine-threonine kinase receptor-associated protein (STRAP) from Homo sapiens (Human).